Consider the following 113-residue polypeptide: U11-theraphotoxin-Hhn1a (113 aa).

The N-terminal stretch at 1 to 21 (MNTVRVTFLLVFVLAVSLGQA) is a signal peptide. A propeptide spanning residues 22–74 (DKDENRMEMQEKTEQGESYLDFAENLLLQKLEELEAKLLEEDSEESRNSRQKR) is cleaved from the precursor. 3 cysteine pairs are disulfide-bonded: Cys75-Cys90, Cys82-Cys95, and Cys89-Cys110.

Belongs to the neurotoxin 14 (magi-1) family. 01 (HNTX-16) subfamily. As to expression, expressed by the venom gland.

It is found in the secreted. Probable ion channel inhibitor. The sequence is that of U11-theraphotoxin-Hhn1a from Cyriopagopus hainanus (Chinese bird spider).